The following is a 150-amino-acid chain: Ribonuclease H (150 aa).

The RNase H type-1 domain occupies 1-141; sequence MKFIEVHTDG…VDVLARNQAI (141 aa). Mg(2+) contacts are provided by aspartate 9, glutamate 47, aspartate 69, and aspartate 133.

This sequence belongs to the RNase H family. Monomer. The cofactor is Mg(2+).

Its subcellular location is the cytoplasm. It catalyses the reaction Endonucleolytic cleavage to 5'-phosphomonoester.. In terms of biological role, endonuclease that specifically degrades the RNA of RNA-DNA hybrids. The polypeptide is Ribonuclease H (Xanthomonas euvesicatoria pv. vesicatoria (strain 85-10) (Xanthomonas campestris pv. vesicatoria)).